A 291-amino-acid polypeptide reads, in one-letter code: ATP synthase gamma chain (291 aa).

It belongs to the ATPase gamma chain family. As to quaternary structure, F-type ATPases have 2 components, CF(1) - the catalytic core - and CF(0) - the membrane proton channel. CF(1) has five subunits: alpha(3), beta(3), gamma(1), delta(1), epsilon(1). CF(0) has three main subunits: a, b and c.

The protein resides in the cell inner membrane. In terms of biological role, produces ATP from ADP in the presence of a proton gradient across the membrane. The gamma chain is believed to be important in regulating ATPase activity and the flow of protons through the CF(0) complex. The sequence is that of ATP synthase gamma chain from Nitratidesulfovibrio vulgaris (strain ATCC 29579 / DSM 644 / CCUG 34227 / NCIMB 8303 / VKM B-1760 / Hildenborough) (Desulfovibrio vulgaris).